A 290-amino-acid chain; its full sequence is Signal peptidase I (290 aa).

The Cytoplasmic portion of the chain corresponds to M1–S13. The chain crosses the membrane as a helical span at residues W14–I34. Residues P35–H290 are Extracellular-facing. Active-site residues include S38 and K106.

This sequence belongs to the peptidase S26 family.

Its subcellular location is the cell membrane. It catalyses the reaction Cleavage of hydrophobic, N-terminal signal or leader sequences from secreted and periplasmic proteins.. This Helicobacter pylori (strain ATCC 700392 / 26695) (Campylobacter pylori) protein is Signal peptidase I (lepB).